We begin with the raw amino-acid sequence, 555 residues long: Membrane protein insertase YidC (555 aa).

The helical transmembrane segment at 7 to 24 (ILWVIFSMSLVLLYDNWQ) threads the bilayer. The tract at residues 61 to 81 (TAGAAAPAAPGGAPQAAAQPT) is disordered. 5 helical membrane-spanning segments follow: residues 341 to 361 (GWLT…HGFL), 364 to 384 (WGWS…PLSA), 430 to 450 (LGGC…YWVL), 468 to 488 (LSVP…MFVQ), and 503 to 523 (VMMI…AGLV).

It belongs to the OXA1/ALB3/YidC family. Type 1 subfamily. Interacts with the Sec translocase complex via SecD. Specifically interacts with transmembrane segments of nascent integral membrane proteins during membrane integration.

It localises to the cell inner membrane. Functionally, required for the insertion and/or proper folding and/or complex formation of integral membrane proteins into the membrane. Involved in integration of membrane proteins that insert both dependently and independently of the Sec translocase complex, as well as at least some lipoproteins. Aids folding of multispanning membrane proteins. The polypeptide is Membrane protein insertase YidC (Cupriavidus pinatubonensis (strain JMP 134 / LMG 1197) (Cupriavidus necator (strain JMP 134))).